The sequence spans 341 residues: UDP-glucose 4-epimerase (341 aa).

This sequence belongs to the polysaccharide synthase family.

The enzyme catalyses UDP-alpha-D-glucose = UDP-alpha-D-galactose. Functionally, epimerizes UDP-galactose to UDP-glucose. The chain is UDP-glucose 4-epimerase (capD) from Rickettsia typhi (strain ATCC VR-144 / Wilmington).